A 113-amino-acid polypeptide reads, in one-letter code: Cell cycle protein GpsB (113 aa).

Residues 32 to 71 (LDNVIKDYESFTKDNQQLSDENERLRAKVDELTKQVAVGA) are a coiled coil.

It belongs to the GpsB family. Forms polymers through the coiled coil domains. Interacts with PBP1, MreC and EzrA.

It is found in the cytoplasm. Its function is as follows. Divisome component that associates with the complex late in its assembly, after the Z-ring is formed, and is dependent on DivIC and PBP2B for its recruitment to the divisome. Together with EzrA, is a key component of the system that regulates PBP1 localization during cell cycle progression. Its main role could be the removal of PBP1 from the cell pole after pole maturation is completed. Also contributes to the recruitment of PBP1 to the division complex. Not essential for septum formation. This chain is Cell cycle protein GpsB, found in Lactiplantibacillus plantarum (strain ATCC BAA-793 / NCIMB 8826 / WCFS1) (Lactobacillus plantarum).